We begin with the raw amino-acid sequence, 485 residues long: Peroxisomal catalase (485 aa).

Catalysis depends on residues His-53 and Asn-126. Tyr-336 serves as a coordination point for heme.

Belongs to the catalase family. As to quaternary structure, homotetramer. The cofactor is heme.

The protein localises to the peroxisome matrix. It carries out the reaction 2 H2O2 = O2 + 2 H2O. Functionally, catalyzes the degradation of hydrogen peroxide (H(2)O(2)) generated by peroxisomal oxidases to water and oxygen, thereby protecting cells from the toxic effects of hydrogen peroxide. This Candida albicans (strain SC5314 / ATCC MYA-2876) (Yeast) protein is Peroxisomal catalase (CAT1).